The chain runs to 266 residues: Large ribosomal subunit protein uL2m (266 aa).

It belongs to the universal ribosomal protein uL2 family.

The protein localises to the mitochondrion. This Dictyostelium discoideum (Social amoeba) protein is Large ribosomal subunit protein uL2m (mrpl2).